The primary structure comprises 139 residues: Histone H2B (139 aa).

Residues 1–10 are compositionally biased toward basic and acidic residues; sequence MAPKVAEKKP. Residues 1 to 47 form a disordered region; the sequence is MAPKVAEKKPSLAGKAPAGKAPAEKKEAGKKTTTATGEKKKRTKARK. An N6-acetyllysine; alternate mark is found at lysine 8 and lysine 9. Residues lysine 8 and lysine 9 each participate in a glycyl lysine isopeptide (Lys-Gly) (interchain with G-Cter in SUMO); alternate cross-link. The residue at position 15 (lysine 15) is an N6-acetyllysine. N6-acetyllysine; alternate is present on lysine 25. Residue lysine 25 forms a Glycyl lysine isopeptide (Lys-Gly) (interchain with G-Cter in SUMO); alternate linkage. A Glycyl lysine isopeptide (Lys-Gly) (interchain with G-Cter in SUMO) cross-link involves residue lysine 26. Residue lysine 133 forms a Glycyl lysine isopeptide (Lys-Gly) (interchain with G-Cter in ubiquitin) linkage.

Belongs to the histone H2B family. As to quaternary structure, the nucleosome is a histone octamer containing two molecules each of H2A, H2B, H3 and H4 assembled in one H3-H4 heterotetramer and two H2A-H2B heterodimers. The octamer wraps approximately 147 bp of DNA. Post-translationally, monoubiquitinated by the UBC2-BRE1 complex to form H2BK123ub1. H2BK123ub1 gives a specific tag for epigenetic transcriptional activation and is also prerequisite for H3K4me and H3K79me formation. H2BK123ub1 also modulates the formation of double-strand breaks during meiosis and is a prerequisite for DNA-damage checkpoint activation. In terms of processing, acetylated by GCN5 to form H2BK11ac and H2BK16ac. H2BK16ac can also be formed by ESA1. Acetylation of N-terminal lysines and particularly formation of H2BK11acK16ac has a positive effect on transcription. Sumoylation to form H2BK6su or H2BK7su, and probably also H2BK16su or H2BK17su, occurs preferentially near the telomeres and represses gene transcription.

It localises to the nucleus. Its subcellular location is the chromosome. Functionally, core component of nucleosome. Nucleosomes wrap and compact DNA into chromatin, limiting DNA accessibility to the cellular machineries which require DNA as a template. Histones thereby play a central role in transcription regulation, DNA repair, DNA replication and chromosomal stability. DNA accessibility is regulated via a complex set of post-translational modifications of histones, also called histone code, and nucleosome remodeling. The chain is Histone H2B (HTB1) from Yarrowia lipolytica (strain CLIB 122 / E 150) (Yeast).